The sequence spans 218 residues: Small ribosomal subunit protein uS5 (218 aa).

Residues 1–45 (MPGRQRRDGGNGPAGQNSNGPEGRDNRRGGGDRRGGGDRRDNAAE) form a disordered region. Basic and acidic residues predominate over residues 22–45 (EGRDNRRGGGDRRGGGDRRDNAAE). One can recognise an S5 DRBM domain in the interval 48–111 (QLERVVAINR…EEARKGFFRV (64 aa)).

The protein belongs to the universal ribosomal protein uS5 family. As to quaternary structure, part of the 30S ribosomal subunit. Contacts proteins S4 and S8.

In terms of biological role, with S4 and S12 plays an important role in translational accuracy. Located at the back of the 30S subunit body where it stabilizes the conformation of the head with respect to the body. This chain is Small ribosomal subunit protein uS5, found in Nocardia farcinica (strain IFM 10152).